A 292-amino-acid chain; its full sequence is Formamidopyrimidine-DNA glycosylase (292 aa).

The active-site Schiff-base intermediate with DNA is the proline 2. The active-site Proton donor is glutamate 3. The active-site Proton donor; for beta-elimination activity is the lysine 61. DNA is bound by residues histidine 96, arginine 115, and lysine 161. The segment at 247–281 (SAYGQEDRPCPRCGTAIRREKFMNRSSFSCPKCQP) adopts an FPG-type zinc-finger fold. Catalysis depends on arginine 271, which acts as the Proton donor; for delta-elimination activity.

Belongs to the FPG family. Monomer. Zn(2+) serves as cofactor.

The catalysed reaction is Hydrolysis of DNA containing ring-opened 7-methylguanine residues, releasing 2,6-diamino-4-hydroxy-5-(N-methyl)formamidopyrimidine.. It carries out the reaction 2'-deoxyribonucleotide-(2'-deoxyribose 5'-phosphate)-2'-deoxyribonucleotide-DNA = a 3'-end 2'-deoxyribonucleotide-(2,3-dehydro-2,3-deoxyribose 5'-phosphate)-DNA + a 5'-end 5'-phospho-2'-deoxyribonucleoside-DNA + H(+). Functionally, involved in base excision repair of DNA damaged by oxidation or by mutagenic agents. Acts as a DNA glycosylase that recognizes and removes damaged bases. Has a preference for oxidized purines, such as 7,8-dihydro-8-oxoguanine (8-oxoG). Has AP (apurinic/apyrimidinic) lyase activity and introduces nicks in the DNA strand. Cleaves the DNA backbone by beta-delta elimination to generate a single-strand break at the site of the removed base with both 3'- and 5'-phosphates. In Rhodococcus jostii (strain RHA1), this protein is Formamidopyrimidine-DNA glycosylase.